A 106-amino-acid chain; its full sequence is Nucleoid-associated protein MCCL_1934 (106 aa).

Positions 1 to 34 (MRGGGNMQQMMKQMQKMQKKMAEEQEKLKEERIE) are disordered. Over residues 7–16 (MQQMMKQMQK) the composition is skewed to low complexity. Positions 20-34 (KMAEEQEKLKEERIE) are enriched in basic and acidic residues.

It belongs to the YbaB/EbfC family. Homodimer.

It localises to the cytoplasm. It is found in the nucleoid. Its function is as follows. Binds to DNA and alters its conformation. May be involved in regulation of gene expression, nucleoid organization and DNA protection. The polypeptide is Nucleoid-associated protein MCCL_1934 (Macrococcus caseolyticus (strain JCSC5402) (Macrococcoides caseolyticum)).